Reading from the N-terminus, the 777-residue chain is DNA repair helicase/translocase XPB-R (777 aa).

Positions 212 to 416 (AASDGALRSG…DLFHLVGPKL (205 aa)) constitute a Helicase ATP-binding domain. An ATP-binding site is contributed by 225–232 (LPCGSGKT). The short motif at 369–372 (DEVH) is the DEVH box element. The Helicase C-terminal domain maps to 484 to 631 (IVKRHVAESS…GYTCSVTEFN (148 aa)).

This sequence belongs to the helicase family. RAD25/XPB subfamily.

The enzyme catalyses Couples ATP hydrolysis with the unwinding of duplex DNA by translocating in the 3'-5' direction.. It catalyses the reaction ATP + H2O = ADP + phosphate + H(+). Functionally, ATP-dependent 3'-5' DNA helicase/translocase; binds dsDNA rather than ssDNA, unzipping it in a translocase rather than classical helicase activity. Involved in nucleotide excision repair (NER) of damaged DNA. XPB-R is a paralog of XBP, but is not a component of the TFIIH basal transcription factor and is dispensable for RNA polymerase II transcription. The sequence is that of DNA repair helicase/translocase XPB-R from Trypanosoma brucei brucei (strain 927/4 GUTat10.1).